The primary structure comprises 673 residues: MSRTLASAVPLSSPDYYERLGQLQHGLRDSEKKRLDLEKKLYEYNQSDTCRVKLKYVKLKNYLKEICESEKKAHTRNQEYLKRFERVQAHVVHFTTNTEKLQKLKLEYETQIKKMLCSKDSLGLKEELTDEDREKVAVHEGINSGTAMSRGLYQPATIFMGRQMSAILSMRDFSTEHKSPQPTKNFSIPDPHSHRQTAQSSNVTDSCVVQTSNDTQCLNKSDNIDGKASLQIGEKMPVTASVLSEEEQTHCLEIGSNTRHGKSNLSEGKKSAELNSPLRERLSPENRTTDLKCDSSSGSEGEILTREHIEVEEKRASPPVSPIPVSEYCESENKWSQEKHSPWEGVSDHLAHREPKSQKPFRKMQEEEEESWSTSSDLTISISEDDLILESPEPQPNPGGKMEGEDGIEALKLIHAEQERVALSTEKNCILQTLSSPDSEKESSTNAPTREPGQTPDSDVPRAQVGQHVATLKEHDNSVKEEATALLRKALTEECGRRSAIHSSESSCSLPSILNDNSGIKEAKPAVWLNSVPTREQEVSSGCGDKSKKENVAADIPITETEAYQLLKKATLQDNTNQTENRFQKTDASVSHLSGLNIGSGAFETKTANKIASEASFSSSEGSPLSRHENKKKPVINLKSNALWDESDDSNSEIEAALRPRNHNTDDSDDFYD.

Disordered regions lie at residues 175 to 207 (TEHK…TDSC), 255 to 413 (GSNT…ALKL), 432 to 480 (QTLS…NSVK), 494 to 516 (ECGR…ILND), and 613 to 673 (SEAS…DFYD). 2 stretches are compositionally biased toward polar residues: residues 196–207 (QTAQSSNVTDSC) and 255–266 (GSNTRHGKSNLS). Composition is skewed to basic and acidic residues over residues 267 to 293 (EGKK…DLKC) and 303 to 316 (ILTR…EKRA). Residues Ser317 and Ser321 each carry the phosphoserine modification. Basic and acidic residues predominate over residues 331-357 (SENKWSQEKHSPWEGVSDHLAHREPKS). Thr379 carries the phosphothreonine; by PLK1 modification. Residues 471–480 (TLKEHDNSVK) are compositionally biased toward basic and acidic residues. 2 stretches are compositionally biased toward low complexity: residues 503-512 (SSESSCSLPS) and 613-625 (SEAS…GSPL). Ser647, Ser650, and Ser652 each carry phosphoserine.

Belongs to the kizuna family. Interacts with AKAP9, CEP72, ODF2, PCNT and TUBGCP2. In terms of processing, phosphorylation at Thr-379 by PLK1 is not needed for centrosomal localization or pericentriolar material expansion but is indispensable for spindle-pole stabilization.

Its subcellular location is the cytoplasm. It localises to the cytoskeleton. The protein resides in the microtubule organizing center. It is found in the centrosome. The protein localises to the cilium basal body. In terms of biological role, centrosomal protein required for establishing a robust mitotic centrosome architecture that can endure the forces that converge on the centrosomes during spindle formation. Required for stabilizing the expanded pericentriolar material around the centriole. In Homo sapiens (Human), this protein is Centrosomal protein kizuna (KIZ).